A 600-amino-acid chain; its full sequence is Ligand-dependent nuclear receptor corepressor-like protein (600 aa).

3 disordered regions span residues 1 to 24, 102 to 122, and 495 to 519; these read MEKG…QCRS, SVIG…GQSN, and DGTS…KRGR. Residues 104–122 show a composition bias toward polar residues; it reads IGSSQSTPTEELSSQGQSN. Residues 514–566 enclose the HTH psq-type domain; that stretch reads RKKRGRYRQYDHEIMEEAIAMVMSGKMSVSKAQGIYGVPHSTLEYKVKERSGT. Residues 542-562 constitute a DNA-binding region (H-T-H motif); that stretch reads VSKAQGIYGVPHSTLEYKVKE. A disordered region spans residues 581–600; it reads GLFNMTDSGTGSCKTSSKPV. Positions 583–600 are enriched in polar residues; the sequence is FNMTDSGTGSCKTSSKPV.

It localises to the nucleus. Its function is as follows. May act as transcription activator that binds DNA elements with the sequence 5'-CCCTATCGATCGATCTCTACCT-3'. The chain is Ligand-dependent nuclear receptor corepressor-like protein (LCORL) from Gallus gallus (Chicken).